We begin with the raw amino-acid sequence, 286 residues long: Expansin-like protein 1 (286 aa).

A signal peptide spans 1-21 (MKTFVLFVILLCLTFLSISKS). The Extracellular portion of the chain corresponds to 22–265 (ETCPFSQSLV…TGASIGTPSD (244 aa)). One can recognise an Expansin-like EG45 domain in the interval 44–145 (AGNCGYENLM…YKVPCGVNGN (102 aa)). Disulfide bonds link C47/C77 and C80/C140. N-linked (GlcNAc...) asparagine glycans are attached at residues N82 and N89. The helical transmembrane segment at 266–286 (ASSLTLYALFSLTILFLVMLN) threads the bilayer.

It belongs to the expansin family. Expansin A subfamily.

The protein localises to the membrane. Functionally, may serve to lubricate the movement of the cellulose microfibrils during cell growth and wall extension and/or they may serve to maintain the fluid state of the slug cell wall. The chain is Expansin-like protein 1 (expl1) from Dictyostelium discoideum (Social amoeba).